We begin with the raw amino-acid sequence, 75 residues long: Small ribosomal subunit protein bS18 (75 aa).

It belongs to the bacterial ribosomal protein bS18 family. As to quaternary structure, part of the 30S ribosomal subunit. Forms a tight heterodimer with protein bS6.

Functionally, binds as a heterodimer with protein bS6 to the central domain of the 16S rRNA, where it helps stabilize the platform of the 30S subunit. This chain is Small ribosomal subunit protein bS18, found in Pectobacterium atrosepticum (strain SCRI 1043 / ATCC BAA-672) (Erwinia carotovora subsp. atroseptica).